The chain runs to 449 residues: 1H-pyrrole-2-carbonyl-[peptidyl-carrier protein] chlorinase (449 aa).

FAD is bound by residues Ala-16, Glu-35, Arg-41, His-43, Val-44, Ser-47, Arg-123, Ile-147, and Asp-316. Chloride is bound by residues Ser-327 and Gly-328. Val-329 contacts FAD.

This sequence belongs to the flavin-dependent halogenase family. In terms of assembly, homodimer.

The enzyme catalyses (1H-pyrrole-2-carbonyl)-[peptidyl-carrier protein] + 2 FADH2 + 2 chloride + 2 O2 = (4,5-dichloro-1H-pyrrole-2-carbonyl)-[peptidyl-carrier protein] + 2 FAD + 4 H2O. The catalysed reaction is (1H-pyrrole-2-carbonyl)-[peptidyl-carrier protein] + FADH2 + chloride + O2 = (5-chloro-1H-pyrrole-2-carbonyl)-[peptidyl-carrier protein] + FAD + 2 H2O. It carries out the reaction (5-chloro-1H-pyrrole-2-carbonyl)-[peptidyl-carrier protein] + FADH2 + chloride + O2 = (4,5-dichloro-1H-pyrrole-2-carbonyl)-[peptidyl-carrier protein] + FAD + 2 H2O. The protein operates within antibiotic biosynthesis. Functionally, involved in the biosynthesis of the antibiotic pyoluteorin. Catalyzes the dichlorination of the pyrrole ring of pyrrolyl-S-PltL, generating the 5-chloropyrrolyl-S-PltL intermediate and then the 4,5-dichloropyrrolyl-S-PltL product. In Pseudomonas fluorescens (strain ATCC BAA-477 / NRRL B-23932 / Pf-5), this protein is 1H-pyrrole-2-carbonyl-[peptidyl-carrier protein] chlorinase.